The chain runs to 229 residues: MAKKKAFIPFLYFTSIVFFPWWISLCCNKSLKTWITNWWNTRQRETFLNEIQEKSLLEKFIQLEELFQLDEMIKEYPETDLQKFRLGIHKETIQFIKIHNEYRIHTIFNFSTNLISFVILSSYSFWGKEKLFILNSWVQEFLYNLSDTIKAFLILLLTDLCIGFHSPHGWELMIGYIYKDFGFAHYEQLLSGLVSTFPVILDTIFKYWIFRYLNRVSPSLVVIYHAIND.

4 helical membrane passes run 6–26 (AFIPFLYFTSIVFFPWWISLC), 107–127 (IFNFSTNLISFVILSSYSFWG), 152–172 (FLILLLTDLCIGFHSPHGWEL), and 190–210 (LSGLVSTFPVILDTIFKYWIF).

It belongs to the CemA family.

The protein resides in the plastid. It is found in the chloroplast inner membrane. The catalysed reaction is K(+)(in) + H(+)(out) = K(+)(out) + H(+)(in). In terms of biological role, contributes to K(+)/H(+) antiport activity by supporting proton efflux to control proton extrusion and homeostasis in chloroplasts in a light-dependent manner to modulate photosynthesis. Prevents excessive induction of non-photochemical quenching (NPQ) under continuous-light conditions. Indirectly promotes efficient inorganic carbon uptake into chloroplasts. In Aethionema cordifolium (Lebanon stonecress), this protein is Potassium/proton antiporter CemA.